The sequence spans 133 residues: Small ribosomal subunit protein uS8 (133 aa).

This sequence belongs to the universal ribosomal protein uS8 family. As to quaternary structure, part of the 30S ribosomal subunit. Contacts proteins S5 and S12.

In terms of biological role, one of the primary rRNA binding proteins, it binds directly to 16S rRNA central domain where it helps coordinate assembly of the platform of the 30S subunit. The chain is Small ribosomal subunit protein uS8 from Prochlorococcus marinus (strain MIT 9303).